The chain runs to 440 residues: Methylthioribose-1-phosphate isomerase (440 aa).

Catalysis depends on aspartate 285, which acts as the Proton donor.

It belongs to the eIF-2B alpha/beta/delta subunits family. MtnA subfamily.

The protein resides in the cytoplasm. It is found in the nucleus. The enzyme catalyses 5-(methylsulfanyl)-alpha-D-ribose 1-phosphate = 5-(methylsulfanyl)-D-ribulose 1-phosphate. It functions in the pathway amino-acid biosynthesis; L-methionine biosynthesis via salvage pathway; L-methionine from S-methyl-5-thio-alpha-D-ribose 1-phosphate: step 1/6. Its function is as follows. Catalyzes the interconversion of methylthioribose-1-phosphate (MTR-1-P) into methylthioribulose-1-phosphate (MTRu-1-P). The chain is Methylthioribose-1-phosphate isomerase (mri1) from Botryotinia fuckeliana (strain B05.10) (Noble rot fungus).